Consider the following 804-residue polypeptide: Mechanosensitive cation channel TMEM63A (804 aa).

The Extracellular portion of the chain corresponds to 1-51; sequence MTSSPFLDPWPSKAVFVRERLGLGERPNDSYCYNSAKNSTVLQGVTFGGIP. Residue Asn-38 is glycosylated (N-linked (GlcNAc...) asparagine). Residues 52 to 74 form a helical membrane-spanning segment; it reads TVLLLDVSCFLFLILVFSIIRRR. At 75–133 the chain is on the cytoplasmic side; sequence FWDYGRIALVSEAGSEARFQRLSSSSSGQQDFENELGCCPWLTAIFRLHDDQILEWCGE. A helical transmembrane segment spans residues 134 to 166; it reads DAIHYLSFQRHIIFLLVVISFLSLCVILPVNLS. Topologically, residues 167–190 are extracellular; that stretch reads GDLLGKDPYSFGRTTIANLQTDND. The chain crosses the membrane as a helical span at residues 191–216; that stretch reads LLWLHTVFSVIYLFLTVGFMWHHTRS. Topologically, residues 217–415 are cytoplasmic; sequence IRYKEESLVR…CWKNLSIQGV (199 aa). The segment at 218 to 413 is intracellular linker IL2; confers mechanosensitivity; sequence RYKEESLVRQ…DICWKNLSIQ (196 aa). A helical membrane pass occupies residues 416 to 443; that stretch reads RWWLQWLGINFSLFVVLFFLTTPSIIMS. At 444–461 the chain is on the extracellular side; sequence TMDKFNVTKPIHALNNPV. A glycan (N-linked (GlcNAc...) asparagine) is linked at Asn-449. A helical membrane pass occupies residues 462–489; it reads ISQFFPTLLLWSFSALLPSIVYYSTLLE. Residues 490–494 lie on the Cytoplasmic side of the membrane; the sequence is SHWTR. A helical transmembrane segment spans residues 495–531; the sequence is SGENRIMVSKVYIFLIFMVLILPSLGLTSLDFFFRWL. The Extracellular portion of the chain corresponds to 532–553; the sequence is FDKTSSETSIRLECVFLPDQGA. The helical transmembrane segment at 554–585 threads the bilayer; sequence FFVNYVIASAFIGSGMELLRLPGLILYTFRMI. A gating helix region spans residues 554-585; it reads FFVNYVIASAFIGSGMELLRLPGLILYTFRMI. Over 586–605 the chain is Cytoplasmic; it reads MAKTAADRRNVKQNQAFEYE. The helical transmembrane segment at 606–623 threads the bilayer; it reads FGAMYAWMLCVFTVIMAY. The Extracellular segment spans residues 624–627; that stretch reads SITC. A helical transmembrane segment spans residues 628–650; sequence PIIVPFGLIYILLKHMVDRHNLY. Residues 651–660 lie on the Cytoplasmic side of the membrane; that stretch reads FAYLPAKLEK. Residues 661–688 form a helical membrane-spanning segment; it reads RIHFAAVNQALAAPILCLFWLFFFSFLR. The Extracellular segment spans residues 689–693; it reads LGLTA. Residues 694 to 708 form a helical membrane-spanning segment; that stretch reads PATLFTFLVVLLTIL. The Cytoplasmic segment spans residues 709–804; that stretch reads ACLLYTCFGC…GTAAYAYQES (96 aa). A Phosphoserine modification is found at Ser-738.

The protein belongs to the CSC1 (TC 1.A.17) family. Monomer. N-Glycosylated.

It is found in the lysosome membrane. The protein resides in the early endosome membrane. Its subcellular location is the cell membrane. It catalyses the reaction Ca(2+)(in) = Ca(2+)(out). In terms of biological role, mechanosensitive cation channel with low conductance and high activation threshold. In contrast to TMEM63B, does not show phospholipid scramblase activity. Acts as a regulator of lysosomal morphology by mediating lysosomal mechanosensitivity. Important for the baby's first breath and respiration throughout life. Upon lung inflation conducts cation currents in alveolar type 1 and 2 cells triggering lamellar body exocytosis and surfactant secretion into airspace. Also acts as an osmosensitive cation channel preferentially activated by hypotonic stress. This Mus musculus (Mouse) protein is Mechanosensitive cation channel TMEM63A.